Reading from the N-terminus, the 313-residue chain is Solute carrier family 35 member E3 (313 aa).

10 helical membrane passes run 17–37, 40–60, 77–97, 100–120, 130–147, 153–173, 187–206, 225–245, 252–272, and 275–295; these read GLLL…WIYV, GFPN…GLYV, LLLL…SLQN, IGTY…IQTL, IRLT…NSYY, FLGT…QVWV, LLYY…VPFF, LMVL…YWII, TYNM…YVLF, and PLSI…LAYT.

The protein belongs to the TPT transporter family. SLC35E subfamily.

It localises to the membrane. Putative transporter. This is Solute carrier family 35 member E3 (SLC35E3) from Bos taurus (Bovine).